The following is a 115-amino-acid chain: UPF0597 protein HI_0855 (115 aa).

Belongs to the UPF0597 family.

This Haemophilus influenzae (strain ATCC 51907 / DSM 11121 / KW20 / Rd) protein is UPF0597 protein HI_0855.